Reading from the N-terminus, the 179-residue chain is Natural killer cells antigen CD94 (179 aa).

Residues Met-1–Arg-10 are Cytoplasmic-facing. Residues Leu-11–Leu-31 traverse the membrane as a helical; Signal-anchor for type II membrane protein segment. Residues Ile-32–Ile-179 are Extracellular-facing. 4 disulfides stabilise this stretch: Cys-58–Cys-70, Cys-61–Cys-72, Cys-89–Cys-174, and Cys-152–Cys-166. The region spanning His-68–Lys-175 is the C-type lectin domain. 2 N-linked (GlcNAc...) asparagine glycosylation sites follow: Asn-93 and Asn-109.

As to quaternary structure, can form disulfide-bonded heterodimer with NKG2 family members KLRC1 and KLRC2. KLRD1-KLRC1 heterodimer interacts with peptide-bound MHC-E-B2M heterotrimeric complex. KLRD1 plays a prominent role in directly interacting with MHC-E. KLRD1-KLRC1 interacts with much higher affinity with peptide-bound MHC-E-B2M than KLRD1-KLRC2. Interacts with the adapter protein TYROBP/DAP12; this interaction is required for cell surface expression and cell activation.

It localises to the cell membrane. Its function is as follows. Immune receptor involved in self-nonself discrimination. In complex with KLRC1 or KLRC2 on cytotoxic and regulatory lymphocyte subsets, recognizes non-classical major histocompatibility (MHC) class Ib molecule MHC-E loaded with self-peptides derived from the signal sequence of classical MHC class Ia and non-classical MHC class Ib molecules. Enables cytotoxic cells to monitor the expression of MHC class I molecules in healthy cells and to tolerate self. Primarily functions as a ligand binding subunit as it lacks the capacity to signal. Functionally, KLRD1-KLRC1 acts as an immune inhibitory receptor. Key inhibitory receptor on natural killer (NK) cells that regulates their activation and effector functions. Dominantly counteracts T cell receptor signaling on a subset of memory/effector CD8-positive T cells as part of an antigen-driven response to avoid autoimmunity. On intraepithelial CD8-positive gamma-delta regulatory T cells triggers TGFB1 secretion, which in turn limits the cytotoxic programming of intraepithelial CD8-positive alpha-beta T cells, distinguishing harmless from pathogenic antigens. In MHC-E-rich tumor microenvironment, acts as an immune inhibitory checkpoint and may contribute to progressive loss of effector functions of NK cells and tumor-specific T cells, a state known as cell exhaustion. Upon MHC-E-peptide binding, transmits intracellular signals through KLRC1 immunoreceptor tyrosine-based inhibition motifs (ITIMs) by recruiting INPP5D/SHIP-1 and INPPL1/SHIP-2 tyrosine phosphatases to ITIMs, and ultimately opposing signals transmitted by activating receptors through dephosphorylation of proximal signaling molecules. In terms of biological role, KLRD1-KLRC2 acts as an immune activating receptor. On cytotoxic lymphocyte subsets recognizes MHC-E loaded with signal sequence-derived peptides from non-classical MHC class Ib MHC-G molecules, likely playing a role in the generation and effector functions of adaptive NK cells and in maternal-fetal tolerance during pregnancy. Regulates the effector functions of terminally differentiated cytotoxic lymphocyte subsets, and in particular may play a role in adaptive NK cell response to viral infection. Upon MHC-E-peptide binding, transmits intracellular signals via the adapter protein TYROBP/DAP12, triggering the phosphorylation of proximal signaling molecules and cell activation. This Mus musculus (Mouse) protein is Natural killer cells antigen CD94 (Klrd1).